We begin with the raw amino-acid sequence, 425 residues long: Oxytetracycline polyketide putative beta-ketoacyl synthase 1 (425 aa).

A Ketosynthase family 3 (KS3) domain is found at 7-420 (ARRVVITGIG…GFQSAIVLTE (414 aa)). Residues cysteine 173, histidine 313, and histidine 350 each act as for beta-ketoacyl synthase activity in the active site.

It belongs to the thiolase-like superfamily. Beta-ketoacyl-ACP synthases family.

Its pathway is antibiotic biosynthesis; oxytetracycline biosynthesis. This Streptomyces rimosus protein is Oxytetracycline polyketide putative beta-ketoacyl synthase 1.